A 427-amino-acid chain; its full sequence is Glutamate-1-semialdehyde 2,1-aminomutase (427 aa).

Lysine 265 bears the N6-(pyridoxal phosphate)lysine mark.

It belongs to the class-III pyridoxal-phosphate-dependent aminotransferase family. HemL subfamily. As to quaternary structure, homodimer. Pyridoxal 5'-phosphate serves as cofactor.

It localises to the cytoplasm. The catalysed reaction is (S)-4-amino-5-oxopentanoate = 5-aminolevulinate. It participates in porphyrin-containing compound metabolism; protoporphyrin-IX biosynthesis; 5-aminolevulinate from L-glutamyl-tRNA(Glu): step 2/2. This is Glutamate-1-semialdehyde 2,1-aminomutase from Teredinibacter turnerae (strain ATCC 39867 / T7901).